The sequence spans 106 residues: BLOC-1-related complex subunit 7 (106 aa).

This sequence belongs to the BORCS7 family. In terms of assembly, component of the BLOC-one-related complex (BORC) which is composed of BLOC1S1, BLOC1S2, BORCS5, BORCS6, BORCS7, BORCS8, KXD1 and SNAPIN.

The protein resides in the lysosome membrane. In terms of biological role, as part of the BORC complex may play a role in lysosomes movement and localization at the cell periphery. Associated with the cytosolic face of lysosomes, the BORC complex may recruit ARL8B and couple lysosomes to microtubule plus-end-directed kinesin motor. The chain is BLOC-1-related complex subunit 7 from Homo sapiens (Human).